The following is a 112-amino-acid chain: Protein Churchill (112 aa).

C2, C5, C30, C33, H59, C61, C64, H66, H71, C88, and C91 together coordinate Zn(2+).

The protein belongs to the Churchill family.

Transcriptional activator that mediates FGF signaling during neural development. Plays a role in the regulation of cell movement. Does not bind DNA by itself. The chain is Protein Churchill (Churc1) from Mus musculus (Mouse).